We begin with the raw amino-acid sequence, 113 residues long: Inner membrane protein YiaB (113 aa).

The Cytoplasmic segment spans residues 1 to 9 (MKTSKTVAK). The chain crosses the membrane as a helical span at residues 10–20 (LLFVVGALVYL). The Periplasmic segment spans residues 21–33 (VGLWISCPLLSGK). The helical transmembrane segment at 34–51 (GYFLGVLMTATFGNYAYL) threads the bilayer. The Cytoplasmic segment spans residues 52 to 61 (RAEKLGQLDD). A helical membrane pass occupies residues 62 to 82 (FFTHICQLVALITIGLLFIGV). Over 83 to 84 (LN) the chain is Periplasmic. A helical transmembrane segment spans residues 85–105 (APINTYEMVIYPIAFFVCLFG). At 106–113 (QMRLFRSA) the chain is on the cytoplasmic side.

The protein localises to the cell inner membrane. The polypeptide is Inner membrane protein YiaB (yiaB) (Escherichia coli (strain K12)).